A 258-amino-acid chain; its full sequence is Synapse differentiation-inducing gene protein 1 (258 aa).

Topologically, residues 1-181 (MAGVVEQKSG…NFLVMPPRDH (181 aa)) are cytoplasmic. Ser137 carries the phosphoserine modification. Residues 182-202 (LGLSVFSMLCCFWPLGIAAFY) form a helical membrane-spanning segment. Residues 203–228 (LSHETNKAVAKGDFHQASTSSRRALF) are Extracellular-facing. An intramembrane region (helical) is located at residues 229–249 (LAVLSITIGTGIYVGVAVALI). Over 250 to 258 (AYLSKSNHL) the chain is Extracellular.

This sequence belongs to the CD225/Dispanin family. As to quaternary structure, homodimer. Interacts with GRIA1 and GRIA2.

The protein localises to the cell membrane. It localises to the early endosome membrane. It is found in the postsynaptic density membrane. Its subcellular location is the synapse. The protein resides in the cell projection. The protein localises to the dendrite. It localises to the dendritic spine. May regulate AMPA receptor content at nascent synapses, and have a role in postsynaptic development and maturation. The sequence is that of Synapse differentiation-inducing gene protein 1 (SYNDIG1) from Bos taurus (Bovine).